The primary structure comprises 175 residues: ATP synthase subunit delta (175 aa).

It belongs to the ATPase delta chain family. F-type ATPases have 2 components, F(1) - the catalytic core - and F(0) - the membrane proton channel. F(1) has five subunits: alpha(3), beta(3), gamma(1), delta(1), epsilon(1). F(0) has three main subunits: a(1), b(2) and c(10-14). The alpha and beta chains form an alternating ring which encloses part of the gamma chain. F(1) is attached to F(0) by a central stalk formed by the gamma and epsilon chains, while a peripheral stalk is formed by the delta and b chains.

It localises to the cell inner membrane. In terms of biological role, f(1)F(0) ATP synthase produces ATP from ADP in the presence of a proton or sodium gradient. F-type ATPases consist of two structural domains, F(1) containing the extramembraneous catalytic core and F(0) containing the membrane proton channel, linked together by a central stalk and a peripheral stalk. During catalysis, ATP synthesis in the catalytic domain of F(1) is coupled via a rotary mechanism of the central stalk subunits to proton translocation. Its function is as follows. This protein is part of the stalk that links CF(0) to CF(1). It either transmits conformational changes from CF(0) to CF(1) or is implicated in proton conduction. The chain is ATP synthase subunit delta from Xanthomonas oryzae pv. oryzae (strain MAFF 311018).